The primary structure comprises 461 residues: Cysteine--tRNA ligase (461 aa).

C28 contributes to the Zn(2+) binding site. Positions 30–40 (VTIYDLCHIGH) match the 'HIGH' region motif. Residues C209, H234, and E238 each contribute to the Zn(2+) site. Positions 266 to 270 (KMSKS) match the 'KMSKS' region motif. K269 lines the ATP pocket.

Belongs to the class-I aminoacyl-tRNA synthetase family. As to quaternary structure, monomer. Zn(2+) serves as cofactor.

Its subcellular location is the cytoplasm. The catalysed reaction is tRNA(Cys) + L-cysteine + ATP = L-cysteinyl-tRNA(Cys) + AMP + diphosphate. This chain is Cysteine--tRNA ligase, found in Hamiltonella defensa subsp. Acyrthosiphon pisum (strain 5AT).